The sequence spans 613 residues: Dihydroxy-acid dehydratase (613 aa).

Asp81 is a Mg(2+) binding site. Cys122 contributes to the [2Fe-2S] cluster binding site. Residues Asp123 and Lys124 each coordinate Mg(2+). An N6-carboxylysine modification is found at Lys124. Cys195 serves as a coordination point for [2Fe-2S] cluster. Glu491 lines the Mg(2+) pocket. Ser517 (proton acceptor) is an active-site residue.

It belongs to the IlvD/Edd family. In terms of assembly, homodimer. The cofactor is [2Fe-2S] cluster. It depends on Mg(2+) as a cofactor.

It carries out the reaction (2R)-2,3-dihydroxy-3-methylbutanoate = 3-methyl-2-oxobutanoate + H2O. The enzyme catalyses (2R,3R)-2,3-dihydroxy-3-methylpentanoate = (S)-3-methyl-2-oxopentanoate + H2O. Its pathway is amino-acid biosynthesis; L-isoleucine biosynthesis; L-isoleucine from 2-oxobutanoate: step 3/4. It functions in the pathway amino-acid biosynthesis; L-valine biosynthesis; L-valine from pyruvate: step 3/4. In terms of biological role, functions in the biosynthesis of branched-chain amino acids. Catalyzes the dehydration of (2R,3R)-2,3-dihydroxy-3-methylpentanoate (2,3-dihydroxy-3-methylvalerate) into 2-oxo-3-methylpentanoate (2-oxo-3-methylvalerate) and of (2R)-2,3-dihydroxy-3-methylbutanoate (2,3-dihydroxyisovalerate) into 2-oxo-3-methylbutanoate (2-oxoisovalerate), the penultimate precursor to L-isoleucine and L-valine, respectively. This is Dihydroxy-acid dehydratase from Aeromonas salmonicida (strain A449).